A 313-amino-acid chain; its full sequence is Ribosomal RNA small subunit methyltransferase H (313 aa).

S-adenosyl-L-methionine is bound by residues 35–37 (GGH), Asp55, Phe79, Asp101, and Gln108.

Belongs to the methyltransferase superfamily. RsmH family.

The protein resides in the cytoplasm. It catalyses the reaction cytidine(1402) in 16S rRNA + S-adenosyl-L-methionine = N(4)-methylcytidine(1402) in 16S rRNA + S-adenosyl-L-homocysteine + H(+). In terms of biological role, specifically methylates the N4 position of cytidine in position 1402 (C1402) of 16S rRNA. This is Ribosomal RNA small subunit methyltransferase H from Klebsiella pneumoniae subsp. pneumoniae (strain ATCC 700721 / MGH 78578).